A 425-amino-acid chain; its full sequence is Putative chloroquine resistance transporter (425 aa).

Over 1-56 the chain is Cytoplasmic; that stretch reads MTGIKKGKNKKKNMKNDDRYKELDSLITNGSEIGNNSGRSCVKRFFKIIGNEMKNN. The chain crosses the membrane as a helical span at residues 57-77; it reads VYVYLLSILYLCVCVMNKVFA. Residues 78 to 88 lie on the Vacuolar side of the membrane; that stretch reads KRTLNKMGNYS. Asn86 carries N-linked (GlcNAc...) asparagine glycosylation. Residues 89–109 traverse the membrane as a helical segment; that stretch reads FVTSETHNIICIIVFQLLYFI. Residues 110–126 lie on the Cytoplasmic side of the membrane; sequence YRKTSSSSVYKNESQKN. Residues 127 to 147 form a helical membrane-spanning segment; that stretch reads FGWQFFLISLLDASTVIISMI. At 148–157 the chain is on the vacuolar side; it reads GLTRTTGNIQ. A helical membrane pass occupies residues 158–178; it reads SFIMQLIIPVNMYFWFMFLGY. The Cytoplasmic segment spans residues 179-181; it reads RYH. The helical transmembrane segment at 182 to 202 threads the bilayer; that stretch reads LFNYLGAFIILITIAVVETFL. The Vacuolar segment spans residues 203 to 210; sequence SFETQGEN. The chain crosses the membrane as a helical span at residues 211-231; that stretch reads SIIFNLIMISAFNTLSFSNMT. At 232–249 the chain is on the cytoplasmic side; the sequence is REVVFKKHKINILRLNAM. A helical transmembrane segment spans residues 250–270; the sequence is VVLFQFFTSLLVLPVYNIPFL. The Vacuolar segment spans residues 271–318; that stretch reads KEIYMPFSEMSTNINNGLRCLFYGENTIVENCGVGMVKMCDNCEGAWK. 2 disulfides stabilise this stretch: Cys290-Cys313 and Cys302-Cys310. Residues 319 to 339 traverse the membrane as a helical segment; the sequence is TFITFSFFNICDNLLACYIID. The Cytoplasmic segment spans residues 340 to 347; that stretch reads KFSTMTYT. Residues 348-368 traverse the membrane as a helical segment; that stretch reads IVSCIQGPAITIAYYFKFLAG. The Vacuolar portion of the chain corresponds to 369–378; the sequence is DAVRKPRILD. Residues 379 to 399 traverse the membrane as a helical segment; sequence FLTLFGYLFGTIIYRIGNIIL. Residues 400 to 425 lie on the Cytoplasmic side of the membrane; the sequence is EKKQVIKSQNSNDSEAELTSIETSRA.

The protein belongs to the CRT-like transporter family.

Its subcellular location is the vacuole membrane. Functionally, nutrient transporter. Involved in maintaining the osmotic homeostasis of the digestive vacuole. This is Putative chloroquine resistance transporter from Plasmodium berghei.